A 145-amino-acid chain; its full sequence is MKLNDLSPAPGSRREKHRPGRGIGSGLGKTGGRGHKGQTSRSGGTIAPGFEGGQQPLHRRLPKFGFVSLKAMDRAEVRLSELAKVEGDIVTVQTLKDANVINVNVQRVKIMLSGEVTRAVTIGKGIGATKGARSAIEAAGGKFEE.

A disordered region spans residues 1–57 (MKLNDLSPAPGSRREKHRPGRGIGSGLGKTGGRGHKGQTSRSGGTIAPGFEGGQQPL). A compositionally biased stretch (gly residues) spans 21 to 31 (RGIGSGLGKTG).

This sequence belongs to the universal ribosomal protein uL15 family. In terms of assembly, part of the 50S ribosomal subunit.

Binds to the 23S rRNA. The protein is Large ribosomal subunit protein uL15 of Pseudomonas fluorescens (strain SBW25).